The primary structure comprises 223 residues: Ribose-5-phosphate isomerase A (223 aa).

Substrate is bound by residues 28-31 (TGST), 81-84 (DGTD), and 94-97 (KGGG). Glutamate 103 functions as the Proton acceptor in the catalytic mechanism. Lysine 121 contributes to the substrate binding site.

Belongs to the ribose 5-phosphate isomerase family. Homodimer.

The enzyme catalyses aldehydo-D-ribose 5-phosphate = D-ribulose 5-phosphate. The protein operates within carbohydrate degradation; pentose phosphate pathway; D-ribose 5-phosphate from D-ribulose 5-phosphate (non-oxidative stage): step 1/1. Its function is as follows. Catalyzes the reversible conversion of ribose-5-phosphate to ribulose 5-phosphate. The sequence is that of Ribose-5-phosphate isomerase A from Baumannia cicadellinicola subsp. Homalodisca coagulata.